The sequence spans 253 residues: Ribosomal RNA small subunit methyltransferase J (253 aa).

S-adenosyl-L-methionine is bound by residues 101–102 (RD), 117–118 (ER), and Asp169.

It belongs to the methyltransferase superfamily. RsmJ family.

The protein localises to the cytoplasm. The catalysed reaction is guanosine(1516) in 16S rRNA + S-adenosyl-L-methionine = N(2)-methylguanosine(1516) in 16S rRNA + S-adenosyl-L-homocysteine + H(+). Specifically methylates the guanosine in position 1516 of 16S rRNA. This Psychromonas ingrahamii (strain DSM 17664 / CCUG 51855 / 37) protein is Ribosomal RNA small subunit methyltransferase J.